The sequence spans 693 residues: Elongation factor G (693 aa).

A tr-type G domain is found at Ala8–Leu282. GTP-binding positions include Ala17–Thr24, Asp81–His85, and Asn135–Asp138.

Belongs to the TRAFAC class translation factor GTPase superfamily. Classic translation factor GTPase family. EF-G/EF-2 subfamily.

The protein localises to the cytoplasm. In terms of biological role, catalyzes the GTP-dependent ribosomal translocation step during translation elongation. During this step, the ribosome changes from the pre-translocational (PRE) to the post-translocational (POST) state as the newly formed A-site-bound peptidyl-tRNA and P-site-bound deacylated tRNA move to the P and E sites, respectively. Catalyzes the coordinated movement of the two tRNA molecules, the mRNA and conformational changes in the ribosome. The chain is Elongation factor G from Streptococcus thermophilus (strain CNRZ 1066).